A 309-amino-acid polypeptide reads, in one-letter code: Protein FdhE homolog (309 aa).

The protein belongs to the FdhE family.

The protein localises to the cytoplasm. Necessary for formate dehydrogenase activity. This is Protein FdhE homolog from Serratia proteamaculans (strain 568).